The following is a 105-amino-acid chain: Late embryogenesis abundant protein Lea5-D (105 aa).

Positions 48 to 67 are disordered; sequence KVERRDAMKESSSSETRAYS. Residues 57 to 67 show a composition bias toward low complexity; that stretch reads ESSSSETRAYS.

It belongs to the LEA type 3 family.

The chain is Late embryogenesis abundant protein Lea5-D (LEA5-D) from Gossypium hirsutum (Upland cotton).